Consider the following 249-residue polypeptide: tRNA (guanine-N(7)-)-methyltransferase (249 aa).

S-adenosyl-L-methionine is bound by residues Glu-80, Glu-105, Asp-132, and Asp-155. The active site involves Asp-155. Residues Lys-159, Asp-191, and 228-231 (TKFE) each bind substrate.

The protein belongs to the class I-like SAM-binding methyltransferase superfamily. TrmB family.

The enzyme catalyses guanosine(46) in tRNA + S-adenosyl-L-methionine = N(7)-methylguanosine(46) in tRNA + S-adenosyl-L-homocysteine. Its pathway is tRNA modification; N(7)-methylguanine-tRNA biosynthesis. Functionally, catalyzes the formation of N(7)-methylguanine at position 46 (m7G46) in tRNA. In Mannheimia succiniciproducens (strain KCTC 0769BP / MBEL55E), this protein is tRNA (guanine-N(7)-)-methyltransferase.